A 294-amino-acid polypeptide reads, in one-letter code: tRNA dimethylallyltransferase (294 aa).

11-18 contacts ATP; it reads GPTAVGKT. Position 13 to 18 (13 to 18) interacts with substrate; sequence TAVGKT. Residues 36 to 39 are interaction with substrate tRNA; it reads DSQQ.

It belongs to the IPP transferase family. In terms of assembly, monomer. Requires Mg(2+) as cofactor.

It catalyses the reaction adenosine(37) in tRNA + dimethylallyl diphosphate = N(6)-dimethylallyladenosine(37) in tRNA + diphosphate. Functionally, catalyzes the transfer of a dimethylallyl group onto the adenine at position 37 in tRNAs that read codons beginning with uridine, leading to the formation of N6-(dimethylallyl)adenosine (i(6)A). In Lactococcus lactis subsp. cremoris (strain SK11), this protein is tRNA dimethylallyltransferase.